Reading from the N-terminus, the 369-residue chain is MASVQLRNVTKAWGDVVVSKDINLDIHDGEFVVFVGPSGCGKSTLLRMIAGLETITSGDLFIGETRMNDIPPAERGVGMVFQSYALYPHLSVAENMSFGLKLAGAKKEVMNQRVNQVAEVLQLAHLLERKPKALSGGQRQRVAIGRTLVAEPRVFLLDEPLSNLDAALRVQMRIEISRLHKRLGRTMIYVTHDQVEAMTLADKIVVLDAGRVAQVGKPLELYHYPADRFVAGFIGSPKMNFLPVKVTATAIEQVQVELPNRQQIWLPVESRGVQVGANMSLGIRPEHLLPSDIADVTLEGEVQVVEQLGHETQIYIQIPAIRQNLVYRQNDVVLVEEGATFAIGLPPERCHLFREDGSACRRLHQEPGV.

Positions 4–234 (VQLRNVTKAW…PADRFVAGFI (231 aa)) constitute an ABC transporter domain. Position 36 to 43 (36 to 43 (GPSGCGKS)) interacts with ATP.

This sequence belongs to the ABC transporter superfamily. Maltooligosaccharide importer (TC 3.A.1.1.1) family. As to quaternary structure, the complex is composed of two ATP-binding proteins (MalK), two transmembrane proteins (MalG and MalK) and a solute-binding protein (MalE).

The protein resides in the cell inner membrane. The enzyme catalyses D-maltose(out) + ATP + H2O = D-maltose(in) + ADP + phosphate + H(+). Functionally, part of the ABC transporter complex MalEFGK involved in maltose/maltodextrin import. Responsible for energy coupling to the transport system. The chain is Maltose/maltodextrin import ATP-binding protein MalK from Salmonella typhi.